The following is a 339-amino-acid chain: Photosystem II assembly lipoprotein Ycf48 (339 aa).

Positions 1–22 (MVIVKSWQKIFALLVVLLLCIG) are cleaved as a signal peptide. A lipid anchor (N-palmitoyl cysteine) is attached at Cys-23. Cys-23 carries S-diacylglycerol cysteine lipidation.

This sequence belongs to the Ycf48 family. Part of early PSII assembly complexes which includes D1 (psbA) and PsbI; not found in mature PSII. Binds to the lumenal side of PSII complexes. Interacts with YidC.

The protein localises to the cellular thylakoid membrane. Its function is as follows. A factor required for optimal assembly of photosystem II (PSII), acting in the early stages of PSII assembly. Also plays a role in replacement of photodamaged D1 (psbA). Assists YidC in synthesis of chlorophyll-binding proteins. This chain is Photosystem II assembly lipoprotein Ycf48, found in Trichormus variabilis (strain ATCC 29413 / PCC 7937) (Anabaena variabilis).